The primary structure comprises 235 residues: Ribosomal RNA large subunit methyltransferase E (235 aa).

Positions 76, 78, 99, 115, and 139 each coordinate S-adenosyl-L-methionine. Lys-179 serves as the catalytic Proton acceptor.

Belongs to the class I-like SAM-binding methyltransferase superfamily. RNA methyltransferase RlmE family.

It is found in the cytoplasm. The catalysed reaction is uridine(2552) in 23S rRNA + S-adenosyl-L-methionine = 2'-O-methyluridine(2552) in 23S rRNA + S-adenosyl-L-homocysteine + H(+). Its function is as follows. Specifically methylates the uridine in position 2552 of 23S rRNA at the 2'-O position of the ribose in the fully assembled 50S ribosomal subunit. In Rhodopseudomonas palustris (strain BisB5), this protein is Ribosomal RNA large subunit methyltransferase E.